The chain runs to 502 residues: UPF0371 protein CLK_3516 (502 aa).

This sequence belongs to the UPF0371 family.

This Clostridium botulinum (strain Loch Maree / Type A3) protein is UPF0371 protein CLK_3516.